We begin with the raw amino-acid sequence, 98 residues long: Aspartyl/glutamyl-tRNA(Asn/Gln) amidotransferase subunit C (98 aa).

The protein belongs to the GatC family. Heterotrimer of A, B and C subunits.

It carries out the reaction L-glutamyl-tRNA(Gln) + L-glutamine + ATP + H2O = L-glutaminyl-tRNA(Gln) + L-glutamate + ADP + phosphate + H(+). The enzyme catalyses L-aspartyl-tRNA(Asn) + L-glutamine + ATP + H2O = L-asparaginyl-tRNA(Asn) + L-glutamate + ADP + phosphate + 2 H(+). In terms of biological role, allows the formation of correctly charged Asn-tRNA(Asn) or Gln-tRNA(Gln) through the transamidation of misacylated Asp-tRNA(Asn) or Glu-tRNA(Gln) in organisms which lack either or both of asparaginyl-tRNA or glutaminyl-tRNA synthetases. The reaction takes place in the presence of glutamine and ATP through an activated phospho-Asp-tRNA(Asn) or phospho-Glu-tRNA(Gln). The protein is Aspartyl/glutamyl-tRNA(Asn/Gln) amidotransferase subunit C of Bifidobacterium adolescentis (strain ATCC 15703 / DSM 20083 / NCTC 11814 / E194a).